The chain runs to 118 residues: V-type proton ATPase subunit G 2 (118 aa).

The segment at 23–90 (ADARKRKARR…VQGMQSSQQR (68 aa)) is disordered. The segment covering 35–55 (QAKEEAQMEVEQYRREREQEF) has biased composition (basic and acidic residues). Composition is skewed to polar residues over residues 56–69 (QSKQ…QGNL) and 78–89 (RRQVQGMQSSQQ).

Belongs to the V-ATPase G subunit family. V-ATPase is a heteromultimeric enzyme made up of two complexes: the ATP-hydrolytic V1 complex and the proton translocation V0 complex. The V1 complex consists of three catalytic AB heterodimers that form a heterohexamer, three peripheral stalks each consisting of EG heterodimers, one central rotor including subunits D and F, and the regulatory subunits C and H. The proton translocation complex V0 consists of the proton transport subunit a, a ring of proteolipid subunits c9c'', rotary subunit d, subunits e and f, and the accessory subunits ATP6AP1/Ac45 and ATP6AP2/PRR.

The protein resides in the melanosome. It localises to the cytoplasmic vesicle. It is found in the clathrin-coated vesicle membrane. Subunit of the V1 complex of vacuolar(H+)-ATPase (V-ATPase), a multisubunit enzyme composed of a peripheral complex (V1) that hydrolyzes ATP and a membrane integral complex (V0) that translocates protons. V-ATPase is responsible for acidifying and maintaining the pH of intracellular compartments and in some cell types, is targeted to the plasma membrane, where it is responsible for acidifying the extracellular environment. The polypeptide is V-type proton ATPase subunit G 2 (ATP6V1G2) (Macaca mulatta (Rhesus macaque)).